Here is a 570-residue protein sequence, read N- to C-terminus: Urease subunit alpha (570 aa).

The 436-residue stretch at 135–570 folds into the Urease domain; it reads GGLDIHVHFN…ELPLAQRYHL (436 aa). Histidine 140, histidine 142, and lysine 219 together coordinate Ni(2+). An N6-carboxylysine modification is found at lysine 219. Substrate is bound at residue histidine 221. Positions 248 and 274 each coordinate Ni(2+). Histidine 322 serves as the catalytic Proton donor. Ni(2+) is bound at residue aspartate 362.

This sequence belongs to the metallo-dependent hydrolases superfamily. Urease alpha subunit family. In terms of assembly, heterotrimer of UreA (gamma), UreB (beta) and UreC (alpha) subunits. Three heterotrimers associate to form the active enzyme. The cofactor is Ni cation. Post-translationally, carboxylation allows a single lysine to coordinate two nickel ions.

It is found in the cytoplasm. It catalyses the reaction urea + 2 H2O + H(+) = hydrogencarbonate + 2 NH4(+). The protein operates within nitrogen metabolism; urea degradation; CO(2) and NH(3) from urea (urease route): step 1/1. This Natronomonas pharaonis (strain ATCC 35678 / DSM 2160 / CIP 103997 / JCM 8858 / NBRC 14720 / NCIMB 2260 / Gabara) (Halobacterium pharaonis) protein is Urease subunit alpha.